The chain runs to 353 residues: UDP-N-acetylglucosamine--N-acetylmuramyl-(pentapeptide) pyrophosphoryl-undecaprenol N-acetylglucosamine transferase (353 aa).

UDP-N-acetyl-alpha-D-glucosamine contacts are provided by residues 10–12, Asn-124, Ser-183, and Gln-283; that span reads TGG.

The protein belongs to the glycosyltransferase 28 family. MurG subfamily.

It is found in the cell inner membrane. It catalyses the reaction di-trans,octa-cis-undecaprenyl diphospho-N-acetyl-alpha-D-muramoyl-L-alanyl-D-glutamyl-meso-2,6-diaminopimeloyl-D-alanyl-D-alanine + UDP-N-acetyl-alpha-D-glucosamine = di-trans,octa-cis-undecaprenyl diphospho-[N-acetyl-alpha-D-glucosaminyl-(1-&gt;4)]-N-acetyl-alpha-D-muramoyl-L-alanyl-D-glutamyl-meso-2,6-diaminopimeloyl-D-alanyl-D-alanine + UDP + H(+). Its pathway is cell wall biogenesis; peptidoglycan biosynthesis. Its function is as follows. Cell wall formation. Catalyzes the transfer of a GlcNAc subunit on undecaprenyl-pyrophosphoryl-MurNAc-pentapeptide (lipid intermediate I) to form undecaprenyl-pyrophosphoryl-MurNAc-(pentapeptide)GlcNAc (lipid intermediate II). The polypeptide is UDP-N-acetylglucosamine--N-acetylmuramyl-(pentapeptide) pyrophosphoryl-undecaprenol N-acetylglucosamine transferase (Helicobacter pylori (strain HPAG1)).